The sequence spans 171 residues: 3-hydroxydecanoyl-[acyl-carrier-protein] dehydratase (171 aa).

His70 is a catalytic residue.

The protein belongs to the thioester dehydratase family. FabA subfamily. As to quaternary structure, homodimer.

The protein resides in the cytoplasm. The catalysed reaction is a (3R)-hydroxyacyl-[ACP] = a (2E)-enoyl-[ACP] + H2O. It carries out the reaction (3R)-hydroxydecanoyl-[ACP] = (2E)-decenoyl-[ACP] + H2O. The enzyme catalyses (2E)-decenoyl-[ACP] = (3Z)-decenoyl-[ACP]. Its pathway is lipid metabolism; fatty acid biosynthesis. Necessary for the introduction of cis unsaturation into fatty acids. Catalyzes the dehydration of (3R)-3-hydroxydecanoyl-ACP to E-(2)-decenoyl-ACP and then its isomerization to Z-(3)-decenoyl-ACP. Can catalyze the dehydratase reaction for beta-hydroxyacyl-ACPs with saturated chain lengths up to 16:0, being most active on intermediate chain length. In Shewanella woodyi (strain ATCC 51908 / MS32), this protein is 3-hydroxydecanoyl-[acyl-carrier-protein] dehydratase.